The sequence spans 186 residues: Peptidyl-tRNA hydrolase (186 aa).

Tyr13 is a tRNA binding site. His18 (proton acceptor) is an active-site residue. TRNA contacts are provided by Tyr59, Asn61, and Asn107.

It belongs to the PTH family. As to quaternary structure, monomer.

Its subcellular location is the cytoplasm. The enzyme catalyses an N-acyl-L-alpha-aminoacyl-tRNA + H2O = an N-acyl-L-amino acid + a tRNA + H(+). Functionally, hydrolyzes ribosome-free peptidyl-tRNAs (with 1 or more amino acids incorporated), which drop off the ribosome during protein synthesis, or as a result of ribosome stalling. Catalyzes the release of premature peptidyl moieties from peptidyl-tRNA molecules trapped in stalled 50S ribosomal subunits, and thus maintains levels of free tRNAs and 50S ribosomes. This Thermotoga sp. (strain RQ2) protein is Peptidyl-tRNA hydrolase.